We begin with the raw amino-acid sequence, 211 residues long: Large ribosomal subunit protein eL13 (211 aa).

This sequence belongs to the eukaryotic ribosomal protein eL13 family. Component of the 60S large ribosomal subunit (LSU).

It localises to the cytoplasm. Functionally, component of the ribosome, a large ribonucleoprotein complex responsible for the synthesis of proteins in the cell. The small ribosomal subunit (SSU) binds messenger RNAs (mRNAs) and translates the encoded message by selecting cognate aminoacyl-transfer RNA (tRNA) molecules. The large subunit (LSU) contains the ribosomal catalytic site termed the peptidyl transferase center (PTC), which catalyzes the formation of peptide bonds, thereby polymerizing the amino acids delivered by tRNAs into a polypeptide chain. The nascent polypeptides leave the ribosome through a tunnel in the LSU and interact with protein factors that function in enzymatic processing, targeting, and the membrane insertion of nascent chains at the exit of the ribosomal tunnel. As part of the LSU, it is probably required for its formation and the maturation of rRNAs. This Danio rerio (Zebrafish) protein is Large ribosomal subunit protein eL13 (rpl13).